Reading from the N-terminus, the 183-residue chain is Threonylcarbamoyl-AMP synthase (183 aa).

The region spanning 1-183 is the YrdC-like domain; sequence MNREQIADAL…LRTNQLFRQG (183 aa).

Belongs to the SUA5 family. TsaC subfamily.

The protein localises to the cytoplasm. The catalysed reaction is L-threonine + hydrogencarbonate + ATP = L-threonylcarbamoyladenylate + diphosphate + H2O. Its function is as follows. Required for the formation of a threonylcarbamoyl group on adenosine at position 37 (t(6)A37) in tRNAs that read codons beginning with adenine. Catalyzes the conversion of L-threonine, HCO(3)(-)/CO(2) and ATP to give threonylcarbamoyl-AMP (TC-AMP) as the acyladenylate intermediate, with the release of diphosphate. The chain is Threonylcarbamoyl-AMP synthase from Haemophilus influenzae (strain ATCC 51907 / DSM 11121 / KW20 / Rd).